An 88-amino-acid chain; its full sequence is FAD assembly factor SdhE (88 aa).

It belongs to the SdhE FAD assembly factor family. Monomer. Makes weak or transient interactions with SdhA. Interacts with YgfX. Interacts with FrdA.

It is found in the cytoplasm. The protein operates within antibiotic biosynthesis; prodigiosin biosynthesis. Functionally, an FAD assembly protein, which accelerates covalent attachment of the cofactor into other proteins. Plays an essential role in the assembly of succinate dehydrogenase (SDH, respiratory complex II), an enzyme complex that is a component of both the tricarboxylic acid cycle and the electron transport chain, and which couples the oxidation of succinate to fumarate with the reduction of ubiquinone (coenzyme Q) to ubiquinol. Required for flavinylation (covalent attachment of FAD) of the flavoprotein subunit SdhA of SDH. Required for flavinylation of the flavoprotein subunit FrdA of fumarate reductase (FRD). Flavinylation of SDH and FRD occurs in a similar but not identical manner, as site-specific mutations display subtle differences between them. Flavinylates SdhA in vivo in the absence of the other SDH subunits; SdhE mutants that do not flavinylate also interfere with wild-type activity in a possible dominant-negative fashion. Weakly binds to FAD and facilitates its binding to SdhA. Required for production of prodigiosin antibiotic (Pig); overproduction of SdhE in a deletion mutant leads to decreased synthesis of Pig compared to wild-type. Capable of flavinylating A.pasteurianus SdhA when the SDH operon and this gene are expressed in G.oxydans; flavinylation of SdhA is detected only in the presence of sdhE. This chain is FAD assembly factor SdhE, found in Serratia sp. (strain ATCC 39006) (Prodigiosinella confusarubida).